We begin with the raw amino-acid sequence, 60 residues long: Large ribosomal subunit protein bL32 (60 aa).

Residues 1–20 (MACPKKKTSKSKRSMRRAAW) show a composition bias toward basic residues. Positions 1-22 (MACPKKKTSKSKRSMRRAAWKR) are disordered.

This sequence belongs to the bacterial ribosomal protein bL32 family.

In Thermosynechococcus vestitus (strain NIES-2133 / IAM M-273 / BP-1), this protein is Large ribosomal subunit protein bL32.